Here is a 414-residue protein sequence, read N- to C-terminus: CinA-like protein (414 aa).

The protein belongs to the CinA family.

The sequence is that of CinA-like protein from Acidobacterium capsulatum (strain ATCC 51196 / DSM 11244 / BCRC 80197 / JCM 7670 / NBRC 15755 / NCIMB 13165 / 161).